The primary structure comprises 512 residues: Beta-glucosidase 44 (512 aa).

The signal sequence occupies residues 1–23; that stretch reads MRHLSSPPWPLLLLLLLSSFTSG. Gln-58 contributes to the a beta-D-glucoside binding site. N-linked (GlcNAc...) asparagine glycosylation is present at Asn-86. A beta-D-glucoside contacts are provided by residues His-159 and 204 to 205; that span reads NE. The Proton donor role is filled by Glu-205. The cysteines at positions 224 and 231 are disulfide-linked. Asn-230 carries an N-linked (GlcNAc...) asparagine glycan. The a beta-D-glucoside site is built by Tyr-347 and Glu-419. Residue Glu-419 is the Nucleophile of the active site. Asn-427 carries N-linked (GlcNAc...) asparagine glycosylation. A beta-D-glucoside-binding positions include Trp-466, 473-474, and Phe-482; that span reads EW.

It belongs to the glycosyl hydrolase 1 family. Homodimer.

The protein resides in the secreted. It catalyses the reaction Hydrolysis of terminal, non-reducing beta-D-glucosyl residues with release of beta-D-glucose.. Hydrolyzes p-nitrophenyl beta-D-glucoside, p-nitrophenyl beta-D-mannoside, cellobiose, 4-methylumbelliferyl-beta-D-glucoside, laminarin, amygdalin, esculin and gentiobiose. The sequence is that of Beta-glucosidase 44 from Arabidopsis thaliana (Mouse-ear cress).